A 246-amino-acid polypeptide reads, in one-letter code: UDP-N-acetyl-D-mannosaminuronic acid transferase (246 aa).

Belongs to the glycosyltransferase 26 family.

It catalyses the reaction UDP-N-acetyl-alpha-D-mannosaminouronate + N-acetyl-alpha-D-glucosaminyl-di-trans,octa-cis-undecaprenyl diphosphate = beta-D-ManNAcA-(1-&gt;4)-alpha-D-GlcNAc-di-trans,octa-cis-undecaprenyl diphosphate + UDP + H(+). The protein operates within bacterial outer membrane biogenesis; enterobacterial common antigen biosynthesis. Catalyzes the synthesis of Und-PP-GlcNAc-ManNAcA (Lipid II), the second lipid-linked intermediate involved in enterobacterial common antigen (ECA) synthesis. The chain is UDP-N-acetyl-D-mannosaminuronic acid transferase from Salmonella dublin (strain CT_02021853).